The sequence spans 553 residues: MDIFRILSRGASINKKKDQTSTNSSLIKLSLPSTANKHEHLLDEVERETDFFRTKSHRKLDEPSSKILKSKNKDEERESVAEIVPPLELESEEDARVFRNLHKSKVTGDDIPIPIGSFQDMIGRFKIDKRVLSNLLDAEFVEPTPIQCEAIPITLANRDLIACAPTGSGKTLAFLIPLLQQLVSQNVLKNHGIRGLIISPTNELAVQIFQQLEIISKGKGLNIAILSKQLAGKISNDVVKASKYDILVSTPLRLIDVVKLGKVDLSKVTQLVIDEADKLFDHGFAEQTDELLSHCTNVKIRKSMFSATIPSGVEEMAHSIMKDPIRVIIGHKEAASNTIEQKLVFTGNEEGKLLAIRQMIQNGEFKPPIIIFLQSITRAKALFHELVYDKLNVDVIHAERTPKQRDEVIKRFKNGDIWVLITTDVLARGVDFKGVNMVINYDVPQSAQAYVHRIGRTGRGGRSGKAVTFFTKEDDKAVKPIINVMKQSGCTDGLSDWMEDLGKLSKREKRAVKTHEIERKKISTVPSVIKQKRKQRQNMIEASKRRKQAESEQ.

Positions 120–148 (DMIGRFKIDKRVLSNLLDAEFVEPTPIQC) match the Q motif motif. The 177-residue stretch at 151 to 327 (IPITLANRDL…HSIMKDPIRV (177 aa)) folds into the Helicase ATP-binding domain. 164–171 (APTGSGKT) contributes to the ATP binding site. The DEAD box motif lies at 274–277 (DEAD). Residues 338–502 (TIEQKLVFTG…GLSDWMEDLG (165 aa)) form the Helicase C-terminal domain. A disordered region spans residues 528 to 553 (VIKQKRKQRQNMIEASKRRKQAESEQ).

It belongs to the DEAD box helicase family. DDX52/ROK1 subfamily. As to quaternary structure, interacts with the U3 snoRNA and is associated with the 90S and 40S pre-ribosomes.

Its subcellular location is the nucleus. The protein resides in the nucleolus. The catalysed reaction is ATP + H2O = ADP + phosphate + H(+). Its function is as follows. ATP-dependent RNA helicase involved in 40S ribosomal subunit biogenesis. Required for the processing and cleavage of 35S pre-rRNA at sites A0, A1, and A2, leading to mature 18S rRNA. This Lodderomyces elongisporus (strain ATCC 11503 / CBS 2605 / JCM 1781 / NBRC 1676 / NRRL YB-4239) (Yeast) protein is ATP-dependent RNA helicase ROK1 (ROK1).